Consider the following 140-residue polypeptide: ATP synthase epsilon chain, chloroplastic (140 aa).

Belongs to the ATPase epsilon chain family. F-type ATPases have 2 components, CF(1) - the catalytic core - and CF(0) - the membrane proton channel. CF(1) has five subunits: alpha(3), beta(3), gamma(1), delta(1), epsilon(1). CF(0) has three main subunits: a, b and c.

The protein localises to the plastid. Its subcellular location is the chloroplast thylakoid membrane. Produces ATP from ADP in the presence of a proton gradient across the membrane. The chain is ATP synthase epsilon chain, chloroplastic from Panax ginseng (Korean ginseng).